A 690-amino-acid chain; its full sequence is Wilms tumor protein 1-interacting protein homolog (690 aa).

Disordered regions lie at residues 151–316 (MSAT…VSPR) and 328–372 (TLGS…PRSS). Residues 152–186 (SATSPRSSMASSASSSQEHSKYSSPRSSISSNALS) show a composition bias toward low complexity. 4 stretches are compositionally biased toward polar residues: residues 204–214 (EKYTSPRSSLG), 223–233 (PRSSYASTTSD), 240–261 (PRAS…TSGI), and 272–292 (PRSS…SYSD). Residues 335 to 357 (SVVSPRSSISSHSSRSSRSSRGS) are compositionally biased toward low complexity. LIM zinc-binding domains follow at residues 479–540 (GICI…SGFQ), 544–603 (DKCF…TVFA), and 604–673 (PKCA…RLSV).

It belongs to the zyxin/ajuba family. In terms of assembly, interacts with prickle3.

It localises to the cell junction. The protein localises to the adherens junction. The protein resides in the nucleus. May monitor slit diaphragm protein assembly, a specialized adherens junction characteristic of podocytes. In case of podocyte injury, it shuttles into the nucleus and acts as a transcription regulator. Plays a role in the regulation of cell morphology and cytoskeletal organization. Acts as a transcriptional corepressor for snai1 and snai2/slug and plays a role in regulating neural crest development. Involved in the organization of the basal body. Involved in cilia growth and positioning. This chain is Wilms tumor protein 1-interacting protein homolog (wtip), found in Xenopus laevis (African clawed frog).